An 85-amino-acid chain; its full sequence is UPF0291 protein SpyM3_1470 (85 aa).

The disordered stretch occupies residues Thr-62 to Ser-85.

Belongs to the UPF0291 family.

The protein localises to the cytoplasm. The chain is UPF0291 protein SpyM3_1470 from Streptococcus pyogenes serotype M3 (strain ATCC BAA-595 / MGAS315).